Consider the following 214-residue polypeptide: Putative 3-methyladenine DNA glycosylase (214 aa).

The protein belongs to the DNA glycosylase MPG family.

The polypeptide is Putative 3-methyladenine DNA glycosylase (Gloeobacter violaceus (strain ATCC 29082 / PCC 7421)).